Reading from the N-terminus, the 698-residue chain is D-(-)-3-hydroxybutyrate oligomer hydrolase (698 aa).

The N-terminal stretch at 1 to 32 (MTTIRGGSRRASLPALALLGVLLGACHSDDNA) is a signal peptide. The Charge relay system role is filled by S310.

The protein belongs to the D-(-)-3-hydroxybutyrate oligomer hydrolase family.

It is found in the secreted. It carries out the reaction (3R)-hydroxybutanoate dimer + H2O = 2 (R)-3-hydroxybutanoate + H(+). It participates in lipid metabolism; butanoate metabolism. Participates in the degradation of poly-3-hydroxybutyrate (PHB). It works downstream of poly(3-hydroxybutyrate) depolymerase, hydrolyzing D(-)-3-hydroxybutyrate oligomers of various length (3HB-oligomers) into 3HB-monomers. The chain is D-(-)-3-hydroxybutyrate oligomer hydrolase from Burkholderia thailandensis (strain ATCC 700388 / DSM 13276 / CCUG 48851 / CIP 106301 / E264).